Reading from the N-terminus, the 199-residue chain is Glycerol-3-phosphate acyltransferase (199 aa).

5 helical membrane-spanning segments follow: residues 4-24, 56-76, 80-100, 115-135, and 154-176; these read FALF…AILI, LAVL…GYYL, QFEL…PIFF, IAPI…FVFL, and YVWW…LIYR.

It belongs to the PlsY family. In terms of assembly, probably interacts with PlsX.

Its subcellular location is the cell inner membrane. The catalysed reaction is an acyl phosphate + sn-glycerol 3-phosphate = a 1-acyl-sn-glycero-3-phosphate + phosphate. The protein operates within lipid metabolism; phospholipid metabolism. Functionally, catalyzes the transfer of an acyl group from acyl-phosphate (acyl-PO(4)) to glycerol-3-phosphate (G3P) to form lysophosphatidic acid (LPA). This enzyme utilizes acyl-phosphate as fatty acyl donor, but not acyl-CoA or acyl-ACP. This Haemophilus influenzae (strain PittEE) protein is Glycerol-3-phosphate acyltransferase.